A 181-amino-acid chain; its full sequence is Large ribosomal subunit protein uL6 (181 aa).

Belongs to the universal ribosomal protein uL6 family. Part of the 50S ribosomal subunit.

In terms of biological role, this protein binds to the 23S rRNA, and is important in its secondary structure. It is located near the subunit interface in the base of the L7/L12 stalk, and near the tRNA binding site of the peptidyltransferase center. The polypeptide is Large ribosomal subunit protein uL6 (Desulforudis audaxviator (strain MP104C)).